Here is a 587-residue protein sequence, read N- to C-terminus: 65-kDa microtubule-associated protein 1 (587 aa).

Coiled coils occupy residues 46–84 (QECL…TMSL), 151–181 (DESD…LRKV), 234–257 (LTLK…LIDL), 290–317 (ALAR…MKEI), and 461–489 (AMLD…VQEQ). Over residues 474 to 494 (EEEKRRLREQKKVQEQPHVEQ) the composition is skewed to basic and acidic residues. The disordered stretch occupies residues 474–587 (EEEKRRLREQ…AADHQVPASP (114 aa)). A Phosphoserine modification is found at serine 503. Residue threonine 526 is modified to Phosphothreonine. Over residues 531-542 (LSLNANQNGSRS) the composition is skewed to polar residues. Phosphoserine is present on residues serine 532 and serine 540. A phosphothreonine mark is found at threonine 543 and threonine 552. Positions 543–553 (TAKEAGRRETL) are enriched in basic and acidic residues. Phosphoserine occurs at positions 573, 576, and 586.

This sequence belongs to the MAP65/ASE1 family. As to quaternary structure, forms dimer. Binds to MT, mostly with coaligned MT, both between parallel or antiparallel, forming thick bundles. Interacts with the alpha-tubulin subunit of the tubulin heterodimer. Bundles polymerized MT via the formation of 25-nm crossbridges at specific stages of the cell cycle (e.g. bundles microtubules in interphase, anaphase and telophase but does not bind microtubules in prophase or metaphase), at the plus-end, the minus-end, or along the entire length of MT, and along phragmoplast MT. Interacts with SH3P1 and MPK4. Post-translationally, basal phosphorylation at all stages of the cell cycle. MT-binding properties inhibited by hyperphosphorylation mediated by CDKs and/or MAPKs (e.g. ANP2, ANP3, MPK4 and MPK6) during prometaphase and metaphase. As to expression, expressed in all organs and tissues with the exception of sepals and anthers. Bound to subsets of microtubules in the cells of root epidermis, hypocotyl and cotyledons (at protein level).

Its subcellular location is the nucleus. It is found in the cytoplasm. The protein resides in the cytoskeleton. The protein localises to the spindle. It localises to the phragmoplast. Its subcellular location is the cell cortex. Microtubule-associated protein that bundle and stabilize adjacent microtubules (MT) of the cell cortex. Enhances MT nucleation. Can also bind to tubulin dimers and promotes their polymerization. Confers MT resistance to the drug propyzamide and cold conditions. Plays a role in the central spindle at anaphase to early cytokinesis but is not essential at the midline of the phragmoplast at later stages. Represses metaphase spindle organization and the transition to anaphase in dephosphorylated active form. Promotes the formation of a planar network of antiparallel microtubules. May be involved in stomatal movement modulation by regulating the dynamic and arrangement of cortical MT. This is 65-kDa microtubule-associated protein 1 (MAP65-1) from Arabidopsis thaliana (Mouse-ear cress).